The following is a 269-amino-acid chain: MKSIFKVRGCVSHAAQFCQKRTVVSTGTSNTATAGAVRKSFNSTETKPVFATKSEAGNGSHMKEYSSGINSKLGGTPLETRSTADDSLNNSYKQVKGDIDWYTSWYGLGMKPFEAKVQKDLIEPLDPKDIEIKPDGLIYLPEIKYRRILNKAFGAGGWGLVPRSQTIVTSKLVTREYGLICHGQLISVARGEQDYFNEAGIPTATEGCKSNALMRCCKDLGVGSELWDPVFIKKFKVDHCTEKFVEHVTTKRKKKIWLRKDRQVEYPYK.

A mitochondrion-targeting transit peptide spans 1–30 (MKSIFKVRGCVSHAAQFCQKRTVVSTGTSN).

It belongs to the MGM101 family.

It is found in the mitochondrion matrix. The protein resides in the mitochondrion nucleoid. Performs an essential function in the repair of oxidatively damaged mtDNA that is required for the maintenance of the mitochondrial genome. Binds to DNA. In Saccharomyces cerevisiae (strain ATCC 204508 / S288c) (Baker's yeast), this protein is Mitochondrial genome maintenance protein MGM101 (MGM101).